The sequence spans 43 residues: Potassium channel toxin gamma-KTx 3.3 (43 aa).

Intrachain disulfides connect Cys-5/Cys-23, Cys-11/Cys-34, Cys-20/Cys-39, and Cys-24/Cys-41.

The protein belongs to the ergtoxin family. Gamma-KTx 3 subfamily. In terms of tissue distribution, expressed by the venom gland.

It is found in the secreted. Its function is as follows. Blocks Kv11/ERG potassium channels. In Centruroides sculpturatus (Arizona bark scorpion), this protein is Potassium channel toxin gamma-KTx 3.3.